The chain runs to 182 residues: PRA1 family protein D (182 aa).

Ala2 is subject to N-acetylalanine. The next 3 membrane-spanning stretches (helical) occupy residues 68 to 88, 107 to 127, and 129 to 149; these read LITR…WFFL, IVAV…GVWL, and ALTT…LRGT. The segment at 163-182 is disordered; that stretch reads PMLSTSGGGNDGARGDYSGI.

The protein belongs to the PRA1 family. As to quaternary structure, interacts with PRA1F2 and PRA1F3. Interacts with the cauliflower mosaic virus (CaMV) movement protein (via N-terminus). Expressed in hypocotyls, roots, lateral roots, lateral root caps, columella cells, leaves, shoot apex, stems and flowers.

The protein resides in the endosome membrane. Functionally, may be involved in both secretory and endocytic intracellular trafficking in the endosomal/prevacuolar compartments. In Arabidopsis thaliana (Mouse-ear cress), this protein is PRA1 family protein D (PRA1D).